A 382-amino-acid polypeptide reads, in one-letter code: uncharacterized protein (382 aa).

Helical transmembrane passes span 8–28 (VLLLLCGLLLLTLAIAVLNTL), 39–61 (PTWQVGMVSSSYFTGNLLGTLLT), 75–95 (YLASLIFAAGCVGLGLMVGFW), 102–122 (FIAGVGCAMIWVVVESALMCS), 131–151 (LLAAYMMVYYVGTVLGQLMIS), 157–177 (LMSVLPWVTGMVLAAILPLLF), 204–224 (LGVNGCIISGIVLGSLYGLMP), 236–256 (GIGFWMAVMVSAGIVGQWPIG), 265–284 (LLVLRVQVFVVILGCLAMLG), 289–311 (APALFILGAAGFTLYPVAMAWAC), 325–345 (ALLLSYTIGSLLGPTFTAMLM), and 349–369 (SDNLLFIMIASVAFIYLLMLL).

It belongs to the major facilitator superfamily. YcaD (TC 2.A.1.26) family.

Its subcellular location is the cell inner membrane. This is an uncharacterized protein from Enterobacter sp. (strain 638).